A 409-amino-acid polypeptide reads, in one-letter code: MYFQSLSADPLDSVNTTTDFNQLAQLLLMLTNSSSKETIATHVVTNSVPSAFQFDWSSHFKEEYDLVEKLNSPQYTNLTSISPSSSTDSNNLILRQIQIPKIEPALLNQCCLCTFAIVDKEISVVDGKYYHNNCLRCQMCDIPFEYSDKCYVRDGVFLCRADHAKRYQKCCRKCEIPLNREDMVMKAKEMIFHHACFVCFICGIKLNPGDYYTMSPQGHLYCHAHYNAVRSTVLCEEAAVATVPAVVAPPPPPPTTTTAPPPAAPEQPPREASTEAEASTDEDGNGSGSQRSKRMRTSFKHHQLRAMKTYFALNHNPDAKDLKQLAAKTNLTKRVLQVWFQNARAKYRRELHDGGRSSSPLCVSAPLASMDMNPPLSSSSSGHSTDGYQLNTPPLSSEIYSPNSNYTHL.

2 consecutive LIM zinc-binding domains span residues 108–169 (NQCC…RYQK) and 171–232 (CRKC…VRST). Disordered regions lie at residues 245 to 299 (AVVA…RTSF) and 372 to 409 (MNPP…YTHL). Pro residues predominate over residues 247-267 (VAPPPPPPTTTTAPPPAAPEQ). Residues 292–351 (SKRMRTSFKHHQLRAMKTYFALNHNPDAKDLKQLAAKTNLTKRVLQVWFQNARAKYRREL) constitute a DNA-binding region (homeobox). Residues 382-409 (GHSTDGYQLNTPPLSSEIYSPNSNYTHL) show a composition bias toward polar residues.

Expressed in the AIA, AIN and AIY interneurons, and in the NSM neurons. Expressed also in ADL and ASI sensory neurons in 60-70% of L2 larvae. Expression is also detected in head muscles of embryos and some early larvae but not late larvae or adults.

Its subcellular location is the nucleus. The protein resides in the perikaryon. It localises to the cell projection. It is found in the axon. Its function is as follows. Transcription factor. Binds to a sequence motif, 5'-TTATTGGCTTCGTTAA-3', which may be involved in AIY interneuron function, in the regulatory elements of target genes; binding is more efficient, in vitro, together with homeobox protein ceh-10. Required for specification of the AIA and AIY interneurons and the NSM neurons. Positively regulates the expression of a number of genes including ceh-10, ceh-23, kal-1, hen-1, ser-2, unc-17 and sra-11 in AIY neurons, and cat-4, flp-4, bas-1, ptps-1 and mgl-1 in NSM neurons. In concert with WNT/beta-catenin signaling, initiates expression of homeobox ceh-10 in AIY, but not in the sister cells, SMDD motor neurons. Also acts in an autoregulatory feedback loop to maintain its own expression. Plays a role in the thermotactic response, olfactory imprinting, regulation of longevity, control of dauer formation and axon outgrowth and pathfinding. Not required for normal chemosensory behavior. This chain is LIM/homeobox protein ttx-3, found in Caenorhabditis elegans.